The chain runs to 152 residues: Lipoprotein signal peptidase (152 aa).

A run of 3 helical transmembrane segments spans residues 5 to 25, 61 to 81, and 84 to 104; these read LFVLSLILLVALDQLSKFWIV, WFFVAITVLVIGYAIYYLATH, and LNIWKQLALLLIISGGIGNFI. Active-site residues include aspartate 114 and aspartate 130. A helical membrane pass occupies residues 125-145; the sequence is IFNVADSYLTVGVILLVICLW.

The protein belongs to the peptidase A8 family.

The protein localises to the cell membrane. It carries out the reaction Release of signal peptides from bacterial membrane prolipoproteins. Hydrolyzes -Xaa-Yaa-Zaa-|-(S,diacylglyceryl)Cys-, in which Xaa is hydrophobic (preferably Leu), and Yaa (Ala or Ser) and Zaa (Gly or Ala) have small, neutral side chains.. Its pathway is protein modification; lipoprotein biosynthesis (signal peptide cleavage). In terms of biological role, this protein specifically catalyzes the removal of signal peptides from prolipoproteins. The sequence is that of Lipoprotein signal peptidase from Streptococcus pyogenes serotype M6 (strain ATCC BAA-946 / MGAS10394).